A 301-amino-acid polypeptide reads, in one-letter code: Chitin deacetylase 1 (301 aa).

A signal peptide spans M1–A24. N-linked (GlcNAc...) asparagine glycosylation is found at N26, N50, and N68. The cysteines at positions 107 and 290 are disulfide-linked. Residues F108 to A288 form the NodB homology domain. The active-site Proton acceptor is D115. Position 115 (D115) interacts with acetate. Co(2+) is bound by residues D116, H162, and H166. N189 is a glycosylation site (N-linked (GlcNAc...) asparagine). Acetate is bound at residue Y203. H263 functions as the Proton donor in the catalytic mechanism.

Belongs to the polysaccharide deacetylase family. The cofactor is Co(2+).

The protein localises to the prospore. It catalyses the reaction [(1-&gt;4)-N-acetyl-beta-D-glucosaminyl](n) + n H2O = chitosan + n acetate. Functionally, hydrolyzes the N-acetamido groups of N-acetyl-D-glucosamine residues in chitin to form chitosan and acetate. Chitosan is a component of the spore wall. The chain is Chitin deacetylase 1 from Saccharomyces cerevisiae (strain ATCC 204508 / S288c) (Baker's yeast).